The sequence spans 405 residues: uncharacterized protein (405 aa).

The N-terminal stretch at Met1–Gly20 is a signal peptide. Cys21 carries the post-translational modification N-acetylcysteine. Cys21 is lipidated: S-archaeol cysteine.

Belongs to the BMP lipoprotein family.

It is found in the cell membrane. This is an uncharacterized protein from Pyrococcus horikoshii (strain ATCC 700860 / DSM 12428 / JCM 9974 / NBRC 100139 / OT-3).